The following is a 185-amino-acid chain: Large ribosomal subunit protein uL5 (185 aa).

Belongs to the universal ribosomal protein uL5 family. In terms of assembly, part of the 50S ribosomal subunit; part of the 5S rRNA/L5/L18/L25 subcomplex. Contacts the 5S rRNA and the P site tRNA. Forms a bridge to the 30S subunit in the 70S ribosome.

Its function is as follows. This is one of the proteins that bind and probably mediate the attachment of the 5S RNA into the large ribosomal subunit, where it forms part of the central protuberance. In the 70S ribosome it contacts protein S13 of the 30S subunit (bridge B1b), connecting the 2 subunits; this bridge is implicated in subunit movement. Contacts the P site tRNA; the 5S rRNA and some of its associated proteins might help stabilize positioning of ribosome-bound tRNAs. The chain is Large ribosomal subunit protein uL5 from Phocaeicola vulgatus (strain ATCC 8482 / DSM 1447 / JCM 5826 / CCUG 4940 / NBRC 14291 / NCTC 11154) (Bacteroides vulgatus).